Consider the following 898-residue polypeptide: Eukaryotic translation initiation factor 3 subunit C (898 aa).

Positions M1–D10 are enriched in basic and acidic residues. Disordered regions lie at residues M1–D38 and V162–K238. Acidic residues predominate over residues S11 to E23. A compositionally biased stretch (basic and acidic residues) spans D24 to L37. Residues D170–E187 show a composition bias toward acidic residues. The segment covering S189 to E202 has biased composition (basic and acidic residues). Positions S209–S218 are enriched in acidic residues. Low complexity predominate over residues S219–N228. Residues Y630–P806 form the PCI domain. Residues Q829–F898 are disordered. 2 stretches are compositionally biased toward basic and acidic residues: residues R850 to K859 and G866 to R878. The span at Q888–F898 shows a compositional bias: basic residues.

Belongs to the eIF-3 subunit C family. As to quaternary structure, component of the eukaryotic translation initiation factor 3 (eIF-3) complex.

Its subcellular location is the cytoplasm. Its function is as follows. Component of the eukaryotic translation initiation factor 3 (eIF-3) complex, which is involved in protein synthesis of a specialized repertoire of mRNAs and, together with other initiation factors, stimulates binding of mRNA and methionyl-tRNAi to the 40S ribosome. The eIF-3 complex specifically targets and initiates translation of a subset of mRNAs involved in cell proliferation. In Caenorhabditis elegans, this protein is Eukaryotic translation initiation factor 3 subunit C.